The chain runs to 95 residues: RING finger protein Z (95 aa).

A lipid anchor (N-myristoyl glycine; by host) is attached at Gly-2. The segment at 38–74 (CKSCWFANKGLIKCSNHYLCLKCLTAMLSRSDYCGIC) adopts an RING-type; atypical zinc-finger fold. A PTAP/PSAP motif motif is present at residues 88 to 91 (PSAP).

This sequence belongs to the arenaviridae Z protein family. Interacts with protein NP; this interaction probably directs the encapsidated genome to budding sites. Interacts (via RING domain) with polymerase L; this interaction inhibits viral transcription and replication, Z partially blocks the product exit tunnel for the releasing nascent RNA product. Interacts with the glycoprotein complex; this interaction plays a role in virion budding. Interacts with host eIF4E; this interaction results in eIF4E reduced affinity for its substrate, the 5'-m7 G cap structure. Interacts (via late-budding domain) with host TSG101; this interaction is essential for budding and release of viral particles. Interacts with host RPLP0; this interaction may serve to load ribosome-like particles inside the virion. Interacts with host PML; this interaction induces PML bodies redistribution in the cytoplasm upon viral infection. Post-translationally, myristoylation is required for the role of RING finger protein Z in assembly and budding.

It is found in the virion. Its subcellular location is the host cytoplasm. The protein localises to the host perinuclear region. The protein resides in the host cell membrane. In terms of biological role, plays a crucial role in virion assembly and budding. Expressed late in the virus life cycle, it acts as an inhibitor of viral transcription and RNA synthesis by interacting with the viral polymerase L. Presumably recruits the NP encapsidated genome to cellular membranes at budding sites via direct interaction with NP. Plays critical roles in the final steps of viral release by interacting with host TSG101, a member of the vacuolar protein-sorting pathway and using other cellular host proteins involved in vesicle formation pathway. The budding of the virus progeny occurs after association of protein Z with the viral glycoprotein complex SSP-GP1-GP2 at the cell periphery, step that requires myristoylation of protein Z. Also selectively represses protein production by associating with host eIF4E. In cell-based minigenome assay, has an inhibitory effect on the ribonucleoprotein machinery (vRNP), which is responsible for the replication and transcription of the viral genome. The protein is RING finger protein Z of Bear Canyon mammarenavirus (isolate Mouse/United States/AV A0070039/2000) (BCNV).